A 180-amino-acid polypeptide reads, in one-letter code: Large ribosomal subunit protein uL6 (180 aa).

Belongs to the universal ribosomal protein uL6 family. As to quaternary structure, part of the 50S ribosomal subunit.

Functionally, this protein binds to the 23S rRNA, and is important in its secondary structure. It is located near the subunit interface in the base of the L7/L12 stalk, and near the tRNA binding site of the peptidyltransferase center. In Picrophilus torridus (strain ATCC 700027 / DSM 9790 / JCM 10055 / NBRC 100828 / KAW 2/3), this protein is Large ribosomal subunit protein uL6.